Reading from the N-terminus, the 492-residue chain is Adenosylhomocysteinase (492 aa).

Substrate-binding residues include T68, D153, and E215. Residue 216–218 (TTT) participates in NAD(+) binding. 2 residues coordinate substrate: K245 and D249. Residues N250, 279 to 284 (GYGDVG), E302, N337, 358 to 360 (IGH), and N406 each bind NAD(+).

Belongs to the adenosylhomocysteinase family. Requires NAD(+) as cofactor.

The protein resides in the cytoplasm. It carries out the reaction S-adenosyl-L-homocysteine + H2O = L-homocysteine + adenosine. It functions in the pathway amino-acid biosynthesis; L-homocysteine biosynthesis; L-homocysteine from S-adenosyl-L-homocysteine: step 1/1. Its function is as follows. May play a key role in the regulation of the intracellular concentration of adenosylhomocysteine. The polypeptide is Adenosylhomocysteinase (Mycobacterium marinum (strain ATCC BAA-535 / M)).